A 70-amino-acid polypeptide reads, in one-letter code: Large ribosomal subunit protein bL31 (70 aa).

Positions 16, 18, 37, and 40 each coordinate Zn(2+).

It belongs to the bacterial ribosomal protein bL31 family. Type A subfamily. As to quaternary structure, part of the 50S ribosomal subunit. Zn(2+) serves as cofactor.

Its function is as follows. Binds the 23S rRNA. This is Large ribosomal subunit protein bL31 from Erwinia tasmaniensis (strain DSM 17950 / CFBP 7177 / CIP 109463 / NCPPB 4357 / Et1/99).